The chain runs to 660 residues: Junctophilin-1 (660 aa).

The Cytoplasmic portion of the chain corresponds to 1-638 (MTGGRFDFDD…EKEANSGPNS (638 aa)). MORN repeat units follow at residues 14–36 (YCGG…KGQG), 38–59 (YSGS…SGNT), 60–82 (YQGY…KWMY), 106–128 (YEGT…DGGT), and 129–151 (YQGQ…PYGM). 3 positions are modified to phosphoserine: serine 157, serine 216, and serine 220. The interval 228 to 247 (SKSSISSKRSSVRSDAAMSR) is disordered. 2 MORN repeats span residues 281-303 (YMGE…NGMK) and 304-326 (YEGE…DGSK). Residues 437–454 (NPEEKVLEKPPSPKESPH) show a composition bias toward basic and acidic residues. The tract at residues 437–631 (NPEEKVLEKP…NDTCPSLEKE (195 aa)) is disordered. Position 452 is a phosphoserine (serine 452). Threonine 461 bears the Phosphothreonine mark. Phosphoserine is present on residues serine 465, serine 469, and serine 475. The span at 466-477 (PESSPKQSHSPQ) shows a compositional bias: low complexity. Composition is skewed to basic and acidic residues over residues 562 to 571 (PPEDREDDRG) and 598 to 612 (VAKE…KKSE). Residues 639–659 (IMIVLVMLLNIGLAILFVHFL) traverse the membrane as a helical; Anchor for type IV membrane protein segment.

It belongs to the junctophilin family. In terms of tissue distribution, specifically expressed in skeletal muscle. Weakly expressed in embryos and neonates. Abundant in young adult muscles.

It localises to the cell membrane. The protein resides in the endoplasmic reticulum membrane. Its subcellular location is the sarcoplasmic reticulum membrane. Junctophilins contribute to the formation of junctional membrane complexes (JMCs) which link the plasma membrane with the endoplasmic or sarcoplasmic reticulum in excitable cells. Provides a structural foundation for functional cross-talk between the cell surface and intracellular calcium release channels. JPH1 contributes to the construction of the skeletal muscle triad by linking the t-tubule (transverse-tubule) and SR (sarcoplasmic reticulum) membranes. The sequence is that of Junctophilin-1 (Jph1) from Mus musculus (Mouse).